Consider the following 1008-residue polypeptide: MVKKKIDNRIRVMIENGVKLGHRTMFIVIGDKARDQVPILYDILTKSTVKARPTVLWCYKNKDEAISNHGKKRAKKIAVGKVDVNEADLFDSFRVATTIHGRYYSETHAVLGRTYGVCVLQDFEALTPNLLARTVETVEGGGLIILLLKTLQSLKQLYTMSMDVHKRFRTEAHQTVTCRFNERLILSLADCKRCLVVNDDLTVLPLSSKTINVEPVNPAGAGRSPNEASLKELKESLLTVQPAGALVNLCKTYDQANAVAQFIEALVDKQLKPPMSLTAARGRGKSAALGLSIAAAVAFGYVNIYVTSPHPENLITLFEFVLKGFDALEYQEHADYTIIRSTNADYKKAIIRINITRSSRQTIQYIAPSDTHLLNAADLLLIDEAAAIPLPLVKKMIGPYLVFMASTINGYEGTGRSLSLKLISQLQKDNNARPPLKLEESIRYQENDDIEKWLINLLCLDASTVPSISSGCPTPDACELYYVDRDALFSYHKAAEAFLHRLVSIYVSSHYKNTPNDLQMMSDAPAHHLFCLLGPVQRMDALPEILVVIQVALEGQISAQSISDSLGRGKKAAGDLIPWNVAEQYGDRDFPKLCGVRIVRVATHPNYQRMGYGKRAIQLLKDYYARKHTNLEDGPVASKDAGKGIEEVEEEELSLLKEQIRPRSRIPTLLQRLHERVPEHVDYIGTSYGLTTELLKFWKNAGFVPVYLSQKSNELTAEHSCIMLHTPNATPWLGLYYQDFRRRVLKLMGKTFREFETKLCLALLKNKSVDTEGSALKVLDKPMLDVYFLPHDLQRLESYARQQSEFRLIIDLLTDIAQLYFQGRIDGLQLDLVQQGILLALGVQGKTVDALGLELNMPGNQLLAKFFDAMKRCNQCFRSVLEEHIEGGMLREADLSKGEELQPLTLSLDKELDQTAQKLSKQQRKELKRLKAEQLDEFQIKGTEEDWSKALETNGTGGGSGLLSVKSGVKRLDGPIETREDGDLAAPLSKKKKKNNPKQRRSQGKSLI.

Residues 282–291 (GRGKSAALGL) and arginine 443 contribute to the ATP site. Residues 531-713 (CLLGPVQRMD…VPVYLSQKSN (183 aa)) enclose the N-acetyltransferase domain. Acetyl-CoA contacts are provided by residues 601-603 (VAT), 608-614 (QRMGYGK), and asparagine 700. Serine 907 carries the phosphoserine modification. The disordered stretch occupies residues 950 to 1008 (ALETNGTGGGSGLLSVKSGVKRLDGPIETREDGDLAAPLSKKKKKNNPKQRRSQGKSLI). Positions 970 to 982 (KRLDGPIETREDG) are enriched in basic and acidic residues. Residues 989–1008 (SKKKKKNNPKQRRSQGKSLI) are compositionally biased toward basic residues.

It belongs to the RNA cytidine acetyltransferase family. NAT10 subfamily. In terms of assembly, component of the PRC1 complex (PSC, PC, PH and dRING1) in 0-12 hours Drosophila embryos. This complex is distinct from the Esc/E(z) complex, which contains many other PcG proteins like Esc, E(z), Su(z)12, HDAC1/Rpd3, Caf1-55 and probably Pho. The two complexes however cooperate and interact together during the first 3 hours of development to establish PcG silencing. Part of the small subunit (SSU) processome, composed of more than 70 proteins and the RNA chaperone small nucleolar RNA (snoRNA) U3.

It localises to the nucleus. It is found in the nucleolus. It carries out the reaction a cytidine in 18S rRNA + acetyl-CoA + ATP + H2O = an N(4)-acetylcytidine in 18S rRNA + ADP + phosphate + CoA + H(+). The catalysed reaction is a cytidine in tRNA + acetyl-CoA + ATP + H2O = an N(4)-acetylcytidine in tRNA + ADP + phosphate + CoA + H(+). RNA cytidine acetyltransferase with specificity toward both 18S rRNA and tRNAs. Catalyzes the formation of N(4)-acetylcytidine (ac4C) in 18S rRNA. Required for early nucleolar cleavages of precursor rRNA at sites A0, A1 and A2 during 18S rRNA synthesis. Catalyzes the formation of ac4C in serine and leucine tRNAs. Requires a tRNA-binding adapter protein for full tRNA acetyltransferase activity but not for 18S rRNA acetylation. Polycomb group (PcG) protein. PcG proteins act by forming multiprotein complexes, which are required to maintain the transcriptionally repressive state of homeotic genes throughout development. PcG proteins are not required to initiate repression, but to maintain it during later stages of development. They probably act via the methylation of histones, rendering chromatin heritably changed in its expressibility. Part of the small subunit (SSU) processome, first precursor of the small eukaryotic ribosomal subunit. During the assembly of the SSU processome in the nucleolus, many ribosome biogenesis factors, an RNA chaperone and ribosomal proteins associate with the nascent pre-rRNA and work in concert to generate RNA folding, modifications, rearrangements and cleavage as well as targeted degradation of pre-ribosomal RNA by the RNA exosome. The protein is RNA cytidine acetyltransferase (l(1)G0020) of Drosophila melanogaster (Fruit fly).